A 312-amino-acid chain; its full sequence is Homoserine O-succinyltransferase (312 aa).

The Acyl-thioester intermediate role is filled by Cys142. Substrate-binding residues include Lys163 and Ser192. Catalysis depends on His235, which acts as the Proton acceptor. Residue Glu237 is part of the active site. Arg249 lines the substrate pocket.

This sequence belongs to the MetA family.

It is found in the cytoplasm. It catalyses the reaction L-homoserine + succinyl-CoA = O-succinyl-L-homoserine + CoA. It participates in amino-acid biosynthesis; L-methionine biosynthesis via de novo pathway; O-succinyl-L-homoserine from L-homoserine: step 1/1. Functionally, transfers a succinyl group from succinyl-CoA to L-homoserine, forming succinyl-L-homoserine. In Aliivibrio salmonicida (strain LFI1238) (Vibrio salmonicida (strain LFI1238)), this protein is Homoserine O-succinyltransferase.